The sequence spans 369 residues: MGQLKGLPVEDGFRMPGEYEPHIGCFMIWPERPDNWRLGGKPAQQNYKEVAVAISNFEPVTMFVSPNQYKNARKELPDTIRVIEMSNDDAWIRDYGPSFLVDDKGDMRGVDWGFNAWGGLLDGLYFPWDKDNQIAKKVCELERIDYYSQKDFILEGCSIHVDGEGTLVTTEECLLSEGRNPNLTKIEIEQTLKKYFHAQKVIWLKHGFYLDETNGHVDNIFNFVAPGEVVLSWTDNKSDPQYEISRECYDILANKTDAKGRTFIIHKLHCPDPVLITQTESEGVEAINGTFPRQAGDRLAASYVNYYTANGAIIFPLFDDPKDKDAQELLEKLYPDRKIVGIKAREILLGGGNIHCITQHLPDKSTIRE.

The active-site Amidino-cysteine intermediate is the C356.

This sequence belongs to the agmatine deiminase family.

It catalyses the reaction agmatine + H2O = N-carbamoylputrescine + NH4(+). This chain is Putative agmatine deiminase 2, found in Listeria monocytogenes serovar 1/2a (strain ATCC BAA-679 / EGD-e).